The primary structure comprises 175 residues: Putative metal-dependent hydrolase BPUM_0784 (175 aa).

Residues His65, His157, and His161 each contribute to the Zn(2+) site.

It belongs to the metal hydrolase YfiT family. As to quaternary structure, homodimer. The cofactor is Zn(2+).

It is found in the cytoplasm. In terms of biological role, possible metal-dependent hydrolase. The sequence is that of Putative metal-dependent hydrolase BPUM_0784 from Bacillus pumilus (strain SAFR-032).